Consider the following 327-residue polypeptide: Zinc transport protein ZntB (327 aa).

Residues 1-273 (MEAIKGSDVN…ARRTYTMSLM (273 aa)) are Cytoplasmic-facing. Residues 274 to 294 (AMVFLPSTFLTGLFGVNLGGI) traverse the membrane as a helical segment. Residues 295 to 300 (PGGGWR) are Periplasmic-facing. Residues 301–321 (FGFSLFCILLVVLIGGVTLWL) form a helical membrane-spanning segment. The Cytoplasmic segment spans residues 322–327 (HRSKWL).

The protein belongs to the CorA metal ion transporter (MIT) (TC 1.A.35) family.

The protein localises to the cell inner membrane. It catalyses the reaction Zn(2+)(out) + H(+)(out) = Zn(2+)(in) + H(+)(in). In terms of biological role, zinc transporter. Acts as a Zn(2+):proton symporter, which likely mediates zinc ion uptake. This chain is Zinc transport protein ZntB, found in Salmonella agona (strain SL483).